Reading from the N-terminus, the 368-residue chain is S-adenosylmethionine:tRNA ribosyltransferase-isomerase (368 aa).

This sequence belongs to the QueA family. In terms of assembly, monomer.

It localises to the cytoplasm. It catalyses the reaction 7-aminomethyl-7-carbaguanosine(34) in tRNA + S-adenosyl-L-methionine = epoxyqueuosine(34) in tRNA + adenine + L-methionine + 2 H(+). It functions in the pathway tRNA modification; tRNA-queuosine biosynthesis. Transfers and isomerizes the ribose moiety from AdoMet to the 7-aminomethyl group of 7-deazaguanine (preQ1-tRNA) to give epoxyqueuosine (oQ-tRNA). This Methylorubrum extorquens (strain CM4 / NCIMB 13688) (Methylobacterium extorquens) protein is S-adenosylmethionine:tRNA ribosyltransferase-isomerase.